Consider the following 425-residue polypeptide: Tumor necrosis factor receptor superfamily member 16 (425 aa).

The signal sequence occupies residues 1–29 (MRRAGAACSAMDRLRLLLLLILGVSSGGA). The Extracellular segment spans residues 30–253 (KETCSTGLYT…VTRGTTDNLI (224 aa)). TNFR-Cys repeat units follow at residues 32–65 (TCST…QTVC), 67–108 (PCLD…DAVC), 109–147 (RCAY…NTVC), and 149–189 (ECPE…DAEC). 12 disulfides stabilise this stretch: cysteine 33–cysteine 44, cysteine 45–cysteine 58, cysteine 48–cysteine 65, cysteine 68–cysteine 84, cysteine 87–cysteine 100, cysteine 90–cysteine 108, cysteine 110–cysteine 123, cysteine 126–cysteine 139, cysteine 129–cysteine 147, cysteine 150–cysteine 165, cysteine 168–cysteine 181, and cysteine 171–cysteine 189. Residues asparagine 61 and asparagine 71 are each glycosylated (N-linked (GlcNAc...) asparagine). The tract at residues 193–225 (PGRWIPRSTPPEGSDSTAPSTQEPEVPPEQDLV) is disordered. Positions 206–215 (SDSTAPSTQE) are enriched in polar residues. A helical transmembrane segment spans residues 254–274 (PVYCSILAAVVVGLVAYIAFK). The Cytoplasmic segment spans residues 275–425 (RWNSCKQNKQ…CSESTATSPV (151 aa)). 2 stretches are compositionally biased toward polar residues: residues 282–292 (NKQGANSRPVN) and 306–327 (SGIS…TASG). Positions 282–332 (NKQGANSRPVNQTPPPEGEKLHSDSGISVDSQSLHDQQTHTQTASGQALKG) are disordered. Serine 312 carries the phosphoserine modification. Residues 327–342 (GQALKGDGNLYSSLPL) form a mediates interaction with KIDINS220 region. Positions 354-419 (GDTWRHLAGE…DIVESLCSES (66 aa)) constitute a Death domain.

Homodimer; disulfide-linked. Heterodimer with SORCS2. The extracellular domains of the heterodimer bind NGF. The cytoplasmic region of the heterodimer binds TRIO. NGF binding mediates dissociation of TRIO from the receptor complex. Interacts with RTN4R. Interacts with TRAF2, TRAF4 and TRAF6. Interacts with PTPN13 and RANBP9. Interacts through TRAF6 with SQSTM1 which bridges NGFR to NTRK1. Interacts with BEX1. Interacts with BEX3. Interacts with KIDINS220 and NTRK1. Can form a ternary complex with NTRK1 and KIDINS220 and this complex is affected by the expression levels of KIDINS220. An increase in KIDINS220 expression leads to a decreased association of NGFR and NTRK1. Interacts (via death domain) with RAB31. Interacts with NTRK2; may regulate the ligand specificity of the NTRK2 receptor. Interacts with LINGO1. Interacts with NRADD. Interacts with MAGED1; the interaction antagonizes the association NGFR:NTRK1. Interacts (via death domain) with ARHGDIA and RIPK2. Interacts with BFAR. In terms of processing, subject to intramembrane proteolytic cleavage by the gamma-secretase complex, giving rise to an intracellular fragment that is rapidly degraded via the proteasome. Post-translationally, N- and O-glycosylated. Phosphorylated on serine residues.

The protein localises to the cell membrane. It is found in the cytoplasm. Its subcellular location is the perikaryon. The protein resides in the cell projection. It localises to the growth cone. The protein localises to the dendritic spine. Functionally, low affinity receptor which can bind to NGF, BDNF, NTF3, and NTF4. Forms a heterodimeric receptor with SORCS2 that binds the precursor forms of NGF, BDNF and NTF3 with high affinity, and has much lower affinity for mature NGF and BDNF. In response to proNGF binding, the heterodimeric receptor with SORCS2 activates a signaling cascade that leads to decreased Rac activity, reorganization of the actin cytoskeleton and neuronal growth cone collapse. Plays an important role in differentiation and survival of specific neuronal populations during development. Can mediate cell survival as well as cell death of neural cells. Plays a role in the inactivation of RHOA. Plays a role in the regulation of the translocation of GLUT4 to the cell surface in adipocytes and skeletal muscle cells in response to insulin, probably by regulating RAB31 activity, and thereby contributes to the regulation of insulin-dependent glucose uptake. Necessary for the circadian oscillation of the clock genes BMAL1, PER1, PER2 and NR1D1 in the suprachiasmatic nucleus (SCN) of the brain and in liver and of the genes involved in glucose and lipid metabolism in the liver. This is Tumor necrosis factor receptor superfamily member 16 (Ngfr) from Rattus norvegicus (Rat).